A 169-amino-acid polypeptide reads, in one-letter code: S-ribosylhomocysteine lyase (169 aa).

Fe cation-binding residues include histidine 54, histidine 58, and cysteine 128.

The protein belongs to the LuxS family. Homodimer. Fe cation is required as a cofactor.

It catalyses the reaction S-(5-deoxy-D-ribos-5-yl)-L-homocysteine = (S)-4,5-dihydroxypentane-2,3-dione + L-homocysteine. Involved in the synthesis of autoinducer 2 (AI-2) which is secreted by bacteria and is used to communicate both the cell density and the metabolic potential of the environment. The regulation of gene expression in response to changes in cell density is called quorum sensing. Catalyzes the transformation of S-ribosylhomocysteine (RHC) to homocysteine (HC) and 4,5-dihydroxy-2,3-pentadione (DPD). This chain is S-ribosylhomocysteine lyase, found in Shewanella woodyi (strain ATCC 51908 / MS32).